Consider the following 616-residue polypeptide: DNA-binding protein RFX5 (616 aa).

The disordered stretch occupies residues 1-29 (MAEDEPDAKSPKTGGRAPPGGAEAGEPTT). Ala2 is modified (N-acetylalanine). Ser10 is modified (phosphoserine). Over residues 13–29 (TGGRAPPGGAEAGEPTT) the composition is skewed to low complexity. Residues 25–90 (GEPTTLLQRL…PSTLSNEEYM (66 aa)) are N-terminal domain. Residues 62–66 (LYLYL) are leucine-rich region; critical for dimer formation and for interaction with RFXAP. Residues 92-168 (AYRWIRNHLE…YCYSGIRRKT (77 aa)) constitute a DNA-binding region (RFX-type winged-helix). Residues 173-178 (PPLPGL) carry the PxLPxI/L motif; mediates interaction with RFXANK motif. Ser185 is subject to Phosphoserine. Disordered regions lie at residues 252–314 (AEED…ESSA) and 391–616 (LPGP…ATPP). Positions 276 to 293 (GAHKKPERLAQPPKDLEA) are enriched in basic and acidic residues. Positions 391-401 (LPGPGPGPGRA) are enriched in pro residues. The segment covering 424–434 (GPHDKGVKRTA) has biased composition (basic and acidic residues). Basic residues predominate over residues 463–473 (KRKRGRPRKKS). Residues 534–546 (QGDGTVSKGGRGP) are compositionally biased toward gly residues. The span at 606-616 (QEHKDPKATPP) shows a compositional bias: basic and acidic residues.

This sequence belongs to the RFX family. Homodimer. The RFX heterotetrameric complex consists of 2 molecules of RFX5 and one each of RFXAP and RFX-B/RFXANK; with each subunit representing a separate complementation group. Interacts (via PxLPxI/L motif) with RFXANK (via ankyrin repeats); the interaction is direct. RFX forms cooperative DNA binding complexes with X2BP and CBF/NF-Y. RFX associates with CIITA to form an active transcriptional complex. In terms of processing, phosphorylated. In terms of tissue distribution, ubiquitous.

The protein resides in the nucleus. In terms of biological role, activates transcription from class II MHC promoters. Recognizes X-boxes. Mediates cooperative binding between RFX and NF-Y. RFX binds the X1 box of MHC-II promoters. The sequence is that of DNA-binding protein RFX5 (RFX5) from Homo sapiens (Human).